The sequence spans 509 residues: Maturase K (509 aa).

Belongs to the intron maturase 2 family. MatK subfamily.

The protein localises to the plastid. It is found in the chloroplast. In terms of biological role, usually encoded in the trnK tRNA gene intron. Probably assists in splicing its own and other chloroplast group II introns. This is Maturase K from Thujopsis dolabrata (Hiba arborvitae).